Here is a 131-residue protein sequence, read N- to C-terminus: Large ribosomal subunit protein eL32 (131 aa).

Belongs to the eukaryotic ribosomal protein eL32 family. In terms of assembly, component of the large ribosomal subunit (LSU). Mature N.crassa ribosomes consist of a small (40S) and a large (60S) subunit. The 40S small subunit contains 1 molecule of ribosomal RNA (18S rRNA) and at least 32 different proteins. The large 60S subunit contains 3 rRNA molecules (26S, 5.8S and 5S rRNA) and at least 42 different proteins.

Its subcellular location is the cytoplasm. Functionally, component of the ribosome, a large ribonucleoprotein complex responsible for the synthesis of proteins in the cell. The small ribosomal subunit (SSU) binds messenger RNAs (mRNAs) and translates the encoded message by selecting cognate aminoacyl-transfer RNA (tRNA) molecules. The large subunit (LSU) contains the ribosomal catalytic site termed the peptidyl transferase center (PTC), which catalyzes the formation of peptide bonds, thereby polymerizing the amino acids delivered by tRNAs into a polypeptide chain. The nascent polypeptides leave the ribosome through a tunnel in the LSU and interact with protein factors that function in enzymatic processing, targeting, and the membrane insertion of nascent chains at the exit of the ribosomal tunnel. The polypeptide is Large ribosomal subunit protein eL32 (crp-63) (Neurospora crassa (strain ATCC 24698 / 74-OR23-1A / CBS 708.71 / DSM 1257 / FGSC 987)).